A 299-amino-acid polypeptide reads, in one-letter code: MVGKARSSNFTLSEKLDLLNLVKPYVKILEEHTNKNSVIVEKNRCWDVIAVNYNAIGVDRPPRTAQGLRSLYKRLKEYAKQELLQQKEAQSEFKSSVSEPTKQVMEMIPQIASFGLIRDRSHIQSANLDETAQAGTSSLQVMVDHHPVAITVEVKQEEDIKPSPPLVSNPQLSDTLEQREEHELMHVVEGSESPSLSSVDMRMTSSPSSVPRRDEIFHQESGEHFRSLLRCDPQVLQMLKEEHQIILENQKNFGLYVQEKRDGLRRRQRLEEELLRAKIEVEKLKATRLRRDLPEYSSL.

Residue Lys94 forms a Glycyl lysine isopeptide (Lys-Gly) (interchain with G-Cter in SUMO2) linkage. The segment at 189–211 (EGSESPSLSSVDMRMTSSPSSVP) is disordered. The segment covering 192-209 (ESPSLSSVDMRMTSSPSS) has biased composition (polar residues).

In terms of assembly, interacts with APBA1 (via PDZ 1 and 2 domains).

The protein resides in the nucleus. In terms of biological role, transcriptional repressor that down-regulates the expression of the fibrinogen gamma chain. Represses transcription of GSK3B gene promoter via its interaction with APBA1. The chain is Fibrinogen silencer-binding protein (Fsbp) from Mus musculus (Mouse).